Here is a 3037-residue protein sequence, read N- to C-terminus: Genome polyprotein (3037 aa).

S2 carries the post-translational modification N-acetylserine; by host. Residues 2–23 form an interaction with STAT1 region; the sequence is STNPKPQRKTKRNTNRRPQDVK. Residues 2-58 form an interaction with EIF2AK2/PKR region; the sequence is STNPKPQRKTKRNTNRRPQDVKFPGGGQIVGGVYLLPRRGPRLGVRAARKTSERSQP. The segment at 2-59 is interaction with DDX3X; sequence STNPKPQRKTKRNTNRRPQDVKFPGGGQIVGGVYLLPRRGPRLGVRAARKTSERSQPR. A disordered region spans residues 2 to 75; the sequence is STNPKPQRKT…PKDRRSTGKS (74 aa). At 2 to 168 the chain is on the cytoplasmic side; sequence STNPKPQRKT…EDGINYATGN (167 aa). Short sequence motifs (nuclear localization signal) lie at residues 5–13 and 38–43; these read PKPQRKTKR and PRRGPR. Residues 7–16 show a composition bias toward basic residues; that stretch reads PQRKTKRNTN. Residues 32–47 show a composition bias toward low complexity; that stretch reads GGVYLLPRRGPRLGVR. S53 carries the post-translational modification Phosphoserine; by host. 2 consecutive short sequence motifs (nuclear localization signal) follow at residues 58 to 64 and 66 to 71; these read PRGRRQP and PKDRRS. A phosphoserine; by host mark is found at S99 and S116. Residues 112–152 form an important for endoplasmic reticulum and mitochondrial localization region; sequence PRHKSRNLGKVIDTLTCGFADLMGYIPVVGAPVGGVARALA. The segment at 122–173 is interaction with APOA2; it reads VIDTLTCGFADLMGYIPVVGAPVGGVARALAHGVRVLEDGINYATGNLPGCS. Residues 164-167 form an important for lipid droplets localization region; it reads YATG. The chain crosses the membrane as a helical span at residues 169 to 189; sequence LPGCSFSIFLLALLSCISVPV. A propeptide spans 178 to 191 (ER anchor for the core protein, removed in mature form by host signal peptidase); the sequence is LLALLSCISVPVSA. Residues 190–358 are Lumenal-facing; that stretch reads SAVEVRNTSS…TGGHWGVMFG (169 aa). N196, N209, and N234 each carry an N-linked (GlcNAc...) asparagine; by host glycan. The tract at residues 265 to 296 is important for fusion; sequence IVMSATLCSALYVGDVCGALMIAAQVVVVSPQ. The N-linked (GlcNAc...) asparagine; by host glycan is linked to N305. Residues 359 to 379 form a helical membrane-spanning segment; it reads LAYFSMQGAWAKVVVILLLTA. At 380–729 the chain is on the lumenal side; that stretch reads GVEASTYTTG…WEWVVLLFLL (350 aa). The segment at 385–412 is HVR1; it reads TYTTGAVVGRSTHLFTSMFSLGSQQRVQ. N417, N423, and N430 each carry an N-linked (GlcNAc...) (high mannose) asparagine; by host glycan. 4 disulfide bridges follow: C429-C554, C452-C459, C488-C496, and C505-C510. N448 carries an N-linked (GlcNAc...) asparagine; by host glycan. Residues 475–480 form an HVR2 region; the sequence is EESVTN. A CD81-binding 1 region spans residues 482-495; that stretch reads ADMRPYCWHYPPRP. Residue N534 is glycosylated (N-linked (GlcNAc...) asparagine; by host). Residues 546–553 are CD81-binding 2; sequence PPKGAWFG. Residue N558 is glycosylated (N-linked (GlcNAc...) asparagine; by host). Intrachain disulfides connect C566–C571, C585–C589, C601–C624, and C611–C648. N-linked (GlcNAc...) (high mannose) asparagine; by host glycans are attached at residues N627 and N649. The cysteines at positions 656 and 681 are disulfide-linked. The PKR/eIF2-alpha phosphorylation homology domain (PePHD) stretch occupies residues 664–675; that stretch reads SQLSPLLHSTTE. A helical membrane pass occupies residues 730-750; that stretch reads LADARVCACLWMLLLLGQAEA. Topologically, residues 751–761 are lumenal; the sequence is ALEKLVILHAA. The chain crosses the membrane as a helical span at residues 762-782; sequence SAASSNGLLYFILFFVAAWCI. The Cytoplasmic segment spans residues 783 to 786; sequence KGRA. The helical transmembrane segment at 787–807 threads the bilayer; that stretch reads VPMVTYTLLGCWSFVLLLMAL. Topologically, residues 808 to 817 are lumenal; the sequence is PHQAYALDAA. A helical membrane pass occupies residues 818 to 838; sequence EQGQIGMALLIAITAFTITPA. The Cytoplasmic segment spans residues 839 to 885; the sequence is YKILLSRCLWWTCYMLVLAEALIQDWIPPLQARGGRDGVIWAMTMFY. Residues 886–906 traverse the membrane as a helical segment; the sequence is PGVVFDITKWLLAILGPGYLF. The Peptidase C18 domain maps to 905 to 1030; the sequence is LFRAAVMRTP…GYTSKGWRLL (126 aa). Topologically, residues 907–932 are lumenal; that stretch reads RAAVMRTPYFVRANALLRMCALVKQL. The tract at residues 908–1210 is protease NS2-3; that stretch reads AAVMRTPYFV…PVESLDVVTR (303 aa). C926 is lipidated: S-palmitoyl cysteine; by host. Residues 933-953 form a helical membrane-spanning segment; sequence AGGKYVQVALITLGKWTGTYI. The interaction with host SCPS1 stretch occupies residues 933-953; it reads AGGKYVQVALITLGKWTGTYI. At 954-1661 the chain is on the cytoplasmic side; the sequence is YDHLSPMSDW…CMQADLEIMT (708 aa). Catalysis depends on for protease NS2 activity; shared with dimeric partner residues H956, E976, and C997. The Peptidase S29 domain maps to 1031-1212; sequence APITAYAQQT…ESLDVVTRSP (182 aa). Active-site charge relay system; for serine protease NS3 activity residues include H1087 and D1111. C1127 and C1129 together coordinate Zn(2+). S1169 acts as the Charge relay system; for serine protease NS3 activity in catalysis. Zn(2+) contacts are provided by C1175 and H1179. The region spanning 1221–1373 is the Helicase ATP-binding domain; that stretch reads PAVPQTYQVG…PNIEEVALGH (153 aa). Residue 1234-1241 coordinates ATP; the sequence is APTGSGKS. Positions 1241 and 1321 each coordinate Mg(2+). The short motif at 1320-1323 is the DECH box element; sequence DECH. The tract at residues 1490 to 1502 is RNA-binding; it reads QRRGRTGRGRLGI. Residues 1662 to 1682 form a helical membrane-spanning segment; it reads STWVLAGGVLAAVAAYCLATG. Residues 1683-1694 are NS3-binding; the sequence is CVSIIGRIHVNQ. The Cytoplasmic portion of the chain corresponds to 1683 to 1809; that stretch reads CVSIIGRIHV…ALTSPLSTST (127 aa). The helical transmembrane segment at 1810 to 1830 threads the bilayer; that stretch reads TILLNIMGGWLASQIAPPAGA. The Lumenal segment spans residues 1831 to 1832; it reads TG. A helical membrane pass occupies residues 1833–1853; it reads FVVSGLVGAAVGSIGLGKILV. A topological domain (cytoplasmic) is located at residue D1854. Residues 1855–1875 traverse the membrane as a helical segment; that stretch reads VLAGYGAGISGALVAFKIMSG. The Lumenal portion of the chain corresponds to 1876–1885; that stretch reads EKPSVEDVVN. The helical transmembrane segment at 1886–1906 threads the bilayer; that stretch reads LLPAILSPGALVVGVICAAIL. Topologically, residues 1907-1976 are cytoplasmic; sequence RRHVGQGEGA…WITEDCPVPC (70 aa). C1976 carries S-palmitoyl cysteine; by host lipidation. Residues 1977-2006 lie within the membrane without spanning it; the sequence is SGSWLRDVWDWVCSILIDFKNWLSAKLFPR. The Cytoplasmic portion of the chain corresponds to 2007 to 3016; that stretch reads LPGIPFISCQ…YHSVSRARPR (1010 aa). Zn(2+) is bound by residues C2015, C2033, C2035, and C2056. Positions 2124-2212 are FKBP8-binding; sequence EFFSWVDGVQ…ASSSASQLSA (89 aa). The transcriptional activation stretch occupies residues 2124–2336; sequence EFFSWVDGVQ…PVPPPRRRRA (213 aa). The tract at residues 2139–2143 is interaction with non-structural protein 4A; it reads PTPKA. Positions 2193–2464 are interaction with host SKP2; it reads RLARGSPPSA…ALITPCSPEE (272 aa). A phosphoserine; by host mark is found at S2198, S2201, S2205, S2208, S2211, and S2214. The segment at 2214-2253 is ISDR; that stretch reads SLRATCTTHAKCPDIDMVDANLFCWCTMGGNMTRIESESK. The tract at residues 2214-2279 is interaction with EIF2AK2/PKR; that stretch reads SLRATCTTHA…REPSIPSEYL (66 aa). Positions 2253-2310 are NS4B-binding; the sequence is KVLMVDSFDPVVDKEDEREPSIPSEYLLPKSRFPPALPPWARPDYNPPLLETWKRPDY. The interval 2303–2381 is V3; sequence ETWKRPDYQP…GTTGETSKSP (79 aa). The SH3-binding motif lies at 2326 to 2329; it reads TPVP. The Nuclear localization signal signature appears at 2331–2339; sequence PRRRRAVVL. A Glycyl lysine isopeptide (Lys-Gly) (interchain with G-Cter in ubiquitin) cross-link involves residue K2354. The tract at residues 2354–2434 is disordered; sequence KSFGCPPPSG…APGSDSGSWS (81 aa). Positions 2402-2411 are enriched in acidic residues; the sequence is EPGDPDLEPE. Residues S2475 and S2488 each carry the phosphoserine; by host modification. A RdRp catalytic domain is found at 2660-2778; sequence PMGFSYDTRC…ISESQGVEED (119 aa). The Mg(2+) site is built by D2666, D2764, and D2765. The helical transmembrane segment at 3017–3037 threads the bilayer; it reads LLLLGLLLLCVGVGIFLLPAR.

This sequence belongs to the hepacivirus polyprotein family. In terms of assembly, homooligomer. Interacts with E1 (via C-terminus). Interacts with the non-structural protein 5A. Interacts (via N-terminus) with host STAT1 (via SH2 domain); this interaction results in decreased STAT1 phosphorylation and ubiquitin-mediated proteasome-dependent STAT1 degradation, leading to decreased IFN-stimulated gene transcription. Interacts with host STAT3; this interaction constitutively activates STAT3. Interacts with host LTBR receptor. Interacts with host TNFRSF1A receptor and possibly induces apoptosis. Interacts with host HNRPK. Interacts with host YWHAE. Interacts with host UBE3A/E6AP. Interacts with host DDX3X. Interacts with host APOA2. Interacts with host RXRA protein. Interacts with host SP110 isoform 3/Sp110b; this interaction sequesters the transcriptional corepressor SP110 away from the nucleus. Interacts with host CREB3 nuclear transcription protein; this interaction triggers cell transformation. Interacts with host ACY3. Interacts with host C1QR1. Interacts with host RBM24; this interaction, which enhances the interaction of the mature core protein with 5'-UTR, may inhibit viral translation and favor replication. Interacts with host EIF2AK2/PKR; this interaction induces the autophosphorylation of EIF2AK2. Part of the viral assembly initiation complex composed of NS2, E1, E2, NS3, NS4A, NS5A and the mature core protein. Forms a heterodimer with envelope glycoprotein E2. Interacts with mature core protein. Interacts with protease NS2. The heterodimer E1/E2 interacts with host CLDN1; this interaction plays a role in viral entry into host cell. Interacts with host SPSB2 (via C-terminus). Part of the viral assembly initiation complex composed of NS2, E1, E2, NS3, NS4A, NS5A and the mature core protein. Interacts with host NEURL3; this interaction prevents E1 binding to glycoprotein E2. As to quaternary structure, forms a heterodimer with envelope glycoprotein E1. Interacts with host CD81 and SCARB1 receptors; these interactions play a role in viral entry into host cell. Interacts with host EIF2AK2/PKR; this interaction inhibits EIF2AK2 and probably allows the virus to evade the innate immune response. Interacts with host CD209/DC-SIGN and CLEC4M/DC-SIGNR. Interact with host SPCS1; this interaction is essential for viral particle assembly. Interacts with protease NS2. The heterodimer E1/E2 interacts with host CLDN1; this interaction plays a role in viral entry into host cell. Part of the viral assembly initiation complex composed of NS2, E1, E2, NS3, NS4A, NS5A and the mature core protein. Interacts with host SLC3A2/4F2hc; the interaction may facilitate viral entry into host cell. Interacts with human PLSCR1. In terms of assembly, homohexamer. Homoheptamer. Interacts with protease NS2. Homodimer. Interacts with host SPCS1; this interaction is essential for viral particle assembly. Interacts with envelope glycoprotein E1. Interacts with envelope glycoprotein E2. Interacts with viroporin p7. Interacts with serine protease/helicase NS3. Part of the replication complex composed of NS2, NS3, NS4A, NS4B, NS5A and the RNA-directed RNA polymerase embedded in an ER-derived membranous web. Part of the viral assembly initiation complex composed of NS2, E1, E2, NS3, NS4A, NS5A and the mature core protein. As to quaternary structure, interacts with protease NS2. Interacts with non-structural protein 4A; this interaction stabilizes the folding of NS3 serine protease. NS3-NS4A interaction is essential for NS3 activation and allows membrane anchorage of the latter. NS3/NS4A complex also prevents phosphorylation of host IRF3, thus preventing the establishment of dsRNA induced antiviral state. Interacts with host MAVS; this interaction leads to the cleavage and inhibition of host MAVS. Interacts with host TICAM1; this interaction leads to the cleavage and inhibition of host TICAM1. Interacts with host TANK-binding kinase/TBK1; this interaction results in the inhibition of the association between TBK1 and IRF3, which leads to the inhibition of IRF3 activation. Interacts with host RBM24. Part of the replication complex composed of NS2, NS3, NS4A, NS4B, NS5A and the RNA-directed RNA polymerase embedded in an ER-derived membranous web. Part of the viral assembly initiation complex composed of NS2, E1, E2, NS3, NS4A, NS5A and the mature core protein. In terms of assembly, interacts with NS3 serine protease; this interaction stabilizes the folding of NS3 serine protease. NS3-NS4A interaction is essential for NS3 activation and allows membrane anchorage of the latter. Interacts with non-structural protein 5A (via N-terminus). Part of the replication complex composed of NS2, NS3, NS4A, NS4B, NS5A and the RNA-directed RNA polymerase embedded in an ER-derived membranous web. Part of the viral assembly initiation complex composed of NS2, E1, E2, NS3, NS4A, NS5A and the mature core protein. Homomultimer. Interacts with non-structural protein NS5A. Interacts with host PLA2G4C; this interaction likely initiates the recruitment of replication complexes to lipid droplets. Interacts with host STING; this interaction disrupts the interaction between STING and TBK1 thereby suppressing the interferon signaling. Part of the replication complex composed of NS2, NS3, NS4A, NS4B, NS5A and the RNA-directed RNA polymerase embedded in an ER-derived membranous web. As to quaternary structure, monomer. Homodimer; dimerization is required for RNA-binding. Interacts with the mature core protein. Interacts (via N-terminus) with non-structural protein 4A. Interacts with non-structural protein 4B. Interacts (via region D2) with RNA-directed RNA polymerase. Part of the viral assembly initiation complex composed of NS2, E1, E2, NS3, NS4A, NS5A and the mature core protein. Part of the replication complex composed of NS2, NS3, NS4A, NS4B, NS5A and the RNA-directed RNA polymerase embedded in an ER-derived membranous web. Interacts with host GRB2. Interacts with host BIN1. Interacts with host PIK3R1. Interacts with host SRCAP. Interacts with host FKBP8. Interacts (via C-terminus) with host VAPB (via MSP domain). Interacts with host EIF2AK2/PKR; this interaction leads to disruption of EIF2AK2 dimerization by NS5A and probably allows the virus to evade the innate immune response. Interacts (via N-terminus) with host PACSIN2 (via N-terminus); this interaction attenuates protein kinase C alpha-mediated phosphorylation of PACSIN2 by disrupting the interaction between PACSIN2 and PRKCA. Interacts (via N-terminus) with host SRC kinase (via SH2 domain). Interacts with most Src-family kinases. Interacts with host IFI27 and SKP2; promotes the ubiquitin-mediated proteasomal degradation of NS5A. Interacts with host GPS2. Interacts with host TNFRSF21; this interaction allows the modulation by the virus of JNK, p38 MAPK, STAT3, and Akt signaling pathways in a DR6-dependent manner. Interacts (via N-terminus) with host CIDEB (via N-terminus); this interaction seems to regulate the association of HCV particles with APOE. Interacts with host CHKA/Choline Kinase-alpha; CHKA bridges host PI4KA and NS5A and potentiates NS5A-stimulated PI4KA activity, which then facilitates the targeting of the ternary complex to the ER for viral replication. Interacts with host SPSB2 (via C-terminus); this interaction targets NS5A for ubiquitination and degradation. Interacts with host RAB18; this interaction may promote the association of NS5A and other replicase components with lipid droplets. Interacts (via region D2) with host PPIA/CYPA; the interaction stimulates RNA-binding ability of NS5A and is dependent on the peptidyl-prolyl cis-trans isomerase activity of PPIA/CYPA. Interacts with host TRIM14; this interaction induces the degradation of NS5A. In terms of assembly, homooligomer. Interacts with non-structural protein 5A. Interacts with host VAPB. Interacts with host PRK2/PKN2. Interacts with host HNRNPA1 and SEPT6; these interactions facilitate viral replication. Part of the replication complex composed of NS2, NS3, NS4A, NS4B, NS5A and the RNA-directed RNA polymerase. Requires Zn(2+) as cofactor. It depends on Mg(2+) as a cofactor. Specific enzymatic cleavages in vivo yield mature proteins. The structural proteins, core, E1, E2 and p7 are produced by proteolytic processing by host signal peptidases. The core protein precursor is synthesized as a 23 kDa, which is retained in the ER membrane through the hydrophobic signal peptide. Cleavage by the signal peptidase releases the 21 kDa mature core protein. The cleavage of the core protein precursor occurs between aminoacids 176 and 188 but the exact cleavage site is not known. Some degraded forms of the core protein appear as well during the course of infection. The other proteins (p7, NS2, NS3, NS4A, NS4B, NS5A and NS5B) are cleaved by the viral proteases. Autoprocessing between NS2 and NS3 is mediated by the NS2 cysteine protease catalytic domain and regulated by the NS3 N-terminal domain. In terms of processing, phosphorylated by host PKC and PKA. Post-translationally, ubiquitinated; mediated by UBE3A and leading to core protein subsequent proteasomal degradation. Highly N-glycosylated. In terms of processing, palmitoylation is required for NS2/3 autoprocessing and E2 recruitment to membranes. Post-translationally, palmitoylated. This modification may play a role in its polymerization or in protein-protein interactions. Phosphorylated on serines in a basal form termed p56. p58 is a hyperphosphorylated form of p56. p56 and p58 coexist in the cell in roughly equivalent amounts. Hyperphosphorylation is dependent on the presence of NS4A. Host CSNK1A1/CKI-alpha or RPS6KB1 kinases may be responsible for NS5A phosphorylation. In terms of processing, tyrosine phosphorylation is essential for the interaction with host SRC. Post-translationally, the N-terminus is phosphorylated by host PRK2/PKN2.

It is found in the host endoplasmic reticulum membrane. Its subcellular location is the host mitochondrion membrane. The protein resides in the virion. The protein localises to the host cytoplasm. It localises to the host nucleus. It is found in the host lipid droplet. Its subcellular location is the virion membrane. The protein resides in the host mitochondrion. The protein localises to the host cell membrane. It localises to the host perinuclear region. The catalysed reaction is Hydrolysis of four peptide bonds in the viral precursor polyprotein, commonly with Asp or Glu in the P6 position, Cys or Thr in P1 and Ser or Ala in P1'.. The enzyme catalyses a ribonucleoside 5'-triphosphate + H2O = a ribonucleoside 5'-diphosphate + phosphate + H(+). It catalyses the reaction ATP + H2O = ADP + phosphate + H(+). It carries out the reaction RNA(n) + a ribonucleoside 5'-triphosphate = RNA(n+1) + diphosphate. Inhibited by the antiviral drug hexamethylene amiloride. Inhibition by amantadine appears to be genotype-dependent. Also inhibited by long-alkyl-chain iminosugar derivatives. Its activity is regulated as follows. Activity is up-regulated by PRK2/PKN2-mediated phosphorylation. In terms of biological role, packages viral RNA to form a viral nucleocapsid, and promotes virion budding. Participates in the viral particle production as a result of its interaction with the non-structural protein 5A. Binds RNA and may function as a RNA chaperone to induce the RNA structural rearrangements taking place during virus replication. Modulates viral translation initiation by interacting with viral IRES and 40S ribosomal subunit. Affects various cell signaling pathways, host immunity and lipid metabolism. Prevents the establishment of cellular antiviral state by blocking the interferon-alpha/beta (IFN-alpha/beta) and IFN-gamma signaling pathways and by blocking the formation of phosphorylated STAT1 and promoting ubiquitin-mediated proteasome-dependent degradation of STAT1. Activates STAT3 leading to cellular transformation. Regulates the activity of cellular genes, including c-myc and c-fos. May repress the promoter of p53, and sequester CREB3 and SP110 isoform 3/Sp110b in the cytoplasm. Represses cell cycle negative regulating factor CDKN1A, thereby interrupting an important check point of normal cell cycle regulation. Targets transcription factors involved in the regulation of inflammatory responses and in the immune response: suppresses TNF-induced NF-kappa-B activation, and activates AP-1. Binds to dendritic cells (DCs) via C1QR1, resulting in down-regulation of T-lymphocytes proliferation. Alters lipid metabolism by interacting with hepatocellular proteins involved in lipid accumulation and storage. Induces up-regulation of FAS promoter activity, and thereby contributes to the increased triglyceride accumulation in hepatocytes (steatosis). Functionally, forms a heterodimer with envelope glycoprotein E2, which mediates virus attachment to the host cell, virion internalization through clathrin-dependent endocytosis and fusion with host membrane. Fusion with the host cell is most likely mediated by both E1 and E2, through conformational rearrangements of the heterodimer required for fusion rather than a classical class II fusion mechanism. E1/E2 heterodimer binds host apolipoproteins such as APOB and ApoE thereby forming a lipo-viro-particle (LVP). APOE associated to the LVP allows the initial virus attachment to cell surface receptors such as the heparan sulfate proteoglycans (HSPGs), syndecan-1 (SDC1), syndecan-1 (SDC2), the low-density lipoprotein receptor (LDLR) and scavenger receptor class B type I (SCARB1). The cholesterol transfer activity of SCARB1 allows E2 exposure and binding of E2 to SCARB1 and the tetraspanin CD81. E1/E2 heterodimer binding on CD81 activates the epithelial growth factor receptor (EGFR) signaling pathway. Diffusion of the complex E1-E2-EGFR-SCARB1-CD81 to the cell lateral membrane allows further interaction with Claudin 1 (CLDN1) and occludin (OCLN) to finally trigger HCV entry. Its function is as follows. Forms a heterodimer with envelope glycoprotein E1, which mediates virus attachment to the host cell, virion internalization through clathrin-dependent endocytosis and fusion with host membrane. Fusion with the host cell is most likely mediated by both E1 and E2, through conformational rearrangements of the heterodimer required for fusion rather than a classical class II fusion mechanism. The interaction between envelope glycoprotein E2 and host apolipoprotein E/APOE allows the proper assembly, maturation and infectivity of the viral particles. This interaction is probably promoted via the up-regulation of cellular autophagy by the virus. E1/E2 heterodimer binds host apolipoproteins such as APOB and APOE thereby forming a lipo-viro-particle (LVP). APOE associated to the LVP allows the initial virus attachment to cell surface receptors such as the heparan sulfate proteoglycans (HSPGs), syndecan-1 (SDC1), syndecan-1 (SDC2), the low-density lipoprotein receptor (LDLR) and scavenger receptor class B type I (SCARB1). The cholesterol transfer activity of SCARB1 allows E2 exposure and binding of E2 to SCARB1 and the tetraspanin CD81. E1/E2 heterodimer binding on CD81 activates the epithelial growth factor receptor (EGFR) signaling pathway. Diffusion of the complex E1-E2-EGFR-SCARB1-CD81 to the cell lateral membrane allows further interaction with Claudin 1 (CLDN1) and occludin (OCLN) to finally trigger HCV entry. Inhibits host EIF2AK2/PKR activation, preventing the establishment of an antiviral state. Viral ligand for CD209/DC-SIGN and CLEC4M/DC-SIGNR, which are respectively found on dendritic cells (DCs), and on liver sinusoidal endothelial cells and macrophage-like cells of lymph node sinuses. These interactions allow the capture of circulating HCV particles by these cells and subsequent facilitated transmission to permissive cells such as hepatocytes and lymphocyte subpopulations. The interaction between E2 and host amino acid transporter complex formed by SLC3A2 and SLC7A5/LAT1 may facilitate viral entry into host cell. Ion channel protein that acts as a viroporin and plays an essential role in the assembly, envelopment and secretion of viral particles. Regulates the host cell secretory pathway, which induces the intracellular retention of viral glycoproteins and favors assembly of viral particles. Creates a pore in acidic organelles and releases Ca(2+) and H(+) in the cytoplasm of infected cells, leading to a productive viral infection. High levels of cytoplasmic Ca(2+) may trigger membrane trafficking and transport of viral ER-associated proteins to viroplasms, sites of viral genome replication. This ionic imbalance induces the assembly of the inflammasome complex, which triggers the maturation of pro-IL-1beta into IL-1beta through the action of caspase-1. Targets also host mitochondria and induces mitochondrial depolarization. In addition of its role as a viroporin, acts as a lipid raft adhesion factor. In terms of biological role, cysteine protease required for the proteolytic auto-cleavage between the non-structural proteins NS2 and NS3. The N-terminus of NS3 is required for the function of NS2 protease (active region NS2-3). Promotes the initiation of viral particle assembly by mediating the interaction between structural and non-structural proteins. Functionally, displays three enzymatic activities: serine protease with a chymotrypsin-like fold, NTPase and RNA helicase. NS3 serine protease, in association with NS4A, is responsible for the cleavages of NS3-NS4A, NS4A-NS4B, NS4B-NS5A and NS5A-NS5B. The NS3/NS4A complex prevents phosphorylation of host IRF3, thus preventing the establishment of dsRNA induced antiviral state. The NS3/NS4A complex induces host amino acid transporter component SLC3A2, thus contributing to HCV propagation. NS3 RNA helicase binds to RNA and unwinds both dsDNA and dsRNA in the 3' to 5' direction, and likely resolves RNA complicated stable secondary structures in the template strand. Binds a single ATP and catalyzes the unzipping of a single base pair of dsRNA. Inhibits host antiviral proteins TBK1 and IRF3 thereby preventing the establishment of an antiviral state. Cleaves host MAVS/CARDIF thereby preventing the establishment of an antiviral state. Cleaves host TICAM1/TRIF, thereby disrupting TLR3 signaling and preventing the establishment of an antiviral state. Its function is as follows. Induces a specific membrane alteration that serves as a scaffold for the virus replication complex. This membrane alteration gives rise to the so-called ER-derived membranous web that contains the replication complex. NS4B self-interaction contributes to its function in membranous web formation. Promotes host TRIF protein degradation in a CASP8-dependent manner thereby inhibiting host TLR3-mediated interferon signaling. Disrupts the interaction between STING and TBK1 contributing to the inhibition of interferon signaling. Phosphorylated protein that is indispensable for viral replication and assembly. Both hypo- and hyperphosphorylated states are required for the viral life cycle. The hyperphosphorylated form of NS5A is an inhibitor of viral replication. Involved in RNA-binding and especially in binding to the viral genome. Zinc is essential for RNA-binding. Participates in the viral particle production as a result of its interaction with the mature viral core protein. Its interaction with host VAPB may target the viral replication complex to vesicles. Down-regulates viral IRES translation initiation. Mediates interferon resistance, presumably by interacting with and inhibiting host EIF2AK2/PKR. Prevents BIN1-induced apoptosis. Acts as a transcriptional activator of some host genes important for viral replication when localized in the nucleus. Via the interaction with host PACSIN2, modulates lipid droplet formation in order to promote virion assembly. Modulates TNFRSF21/DR6 signaling pathway for viral propagation. In terms of biological role, RNA-dependent RNA polymerase that performs primer-template recognition and RNA synthesis during viral replication. Initiates RNA transcription/replication at a flavin adenine dinucleotide (FAD), resulting in a 5'- FAD cap on viral RNAs. In this way, recognition of viral 5' RNA by host pattern recognition receptors can be bypassed, thereby evading activation of antiviral pathways. The sequence is that of Genome polyprotein from Hepatitis C virus genotype 2c (isolate BEBE1) (HCV).